We begin with the raw amino-acid sequence, 103 residues long: Large ribosomal subunit protein bL21 (103 aa).

Belongs to the bacterial ribosomal protein bL21 family. In terms of assembly, part of the 50S ribosomal subunit. Contacts protein L20.

In terms of biological role, this protein binds to 23S rRNA in the presence of protein L20. The chain is Large ribosomal subunit protein bL21 from Vesicomyosocius okutanii subsp. Calyptogena okutanii (strain HA).